The following is an 817-amino-acid chain: Neurabin-2 (817 aa).

Disordered regions lie at residues 1–52 (MMKT…KYGS) and 64–163 (MGTT…GGDK). 2 actin-binding regions span residues 1-154 (MMKT…FERS) and 164-282 (EAVA…QHRV). Ser-15 carries the phosphoserine; by MAPK1 modification. The residue at position 17 (Ser-17) is a Phosphoserine; by CDK5. Ser-94 is subject to Phosphoserine; by PKA. Ser-100 and Ser-116 each carry phosphoserine. The tract at residues 100-371 (SLNENVDHSA…LERGVDNGRA (272 aa)) is interaction with D(2) dopamine receptor. A compositionally biased stretch (pro residues) spans 131–141 (SAQPAPPPHPP). The interaction with ADRA2A, ADRA2B and ADRA2C stretch occupies residues 169 to 255 (RLLRQERAGL…KRSRVFQPPP (87 aa)). Residue Ser-192 is modified to Phosphoserine. Position 193 is a phosphothreonine (Thr-193). Ser-205 is subject to Phosphoserine; by MAPK1. The residue at position 207 (Thr-207) is a Phosphothreonine. The tract at residues 216–451 (EKADSRTGLH…DPAPSRKIHF (236 aa)) is disordered. Residues 290-301 (KPREVRKIKPVE) show a composition bias toward basic and acidic residues. Composition is skewed to low complexity over residues 332-341 (STPATTASPA) and 399-409 (SGLGEDSGGSA). Positions 410 to 425 (LEEDDEEDEEDGEPPY) are enriched in acidic residues. The interval 417–494 (DEEDGEPPYE…LEKRVERLEL (78 aa)) is interaction with protein phosphatase 1. Ser-438 is subject to Phosphoserine. Residues 447–451 (RKIHF) carry the PP1-binding motif motif. Positions 480–525 (SAEYELEKRVERLELFPVELEKDSEGLGISIIGMGAGADMGLEKLG) are interaction with RGS2. One can recognise a PDZ domain in the interval 496 to 584 (PVELEKDSEG…RVRFMIGRER (89 aa)). The stretch at 595–616 (IQQTLEQERWQREMMEQRYAQY) forms a coiled coil. The interaction with TGN38 stretch occupies residues 595-816 (IQQTLEQERW…NLQTLRNSNS (222 aa)). Ser-658 is modified (phosphoserine). Positions 665–816 (EKLVHKFKEL…NLQTLRNSNS (152 aa)) form a coiled coil.

As to quaternary structure, possibly exists as a homodimer, homotrimer or a homotetramer. Interacts with F-actin, PPP1CA, neurabin-1, TGN38 and D(2) dopamine receptor. Interacts with RGS1, RGS2, RGS4, RGS19 and ADRA1B, ADRA2A, ADRA2B, ADRA2C, CDKN2A, PPP1R2, RASGFR1 and TIAM1. Interacts (via C-terminus) with SPATA13 (via C-terminal tail). Interacts with DCLK2. Interacts with ADRA2B. In terms of processing, stimulation of D1 (but not D2) dopamine receptors induces Ser-94 phosphorylation. Dephosphorylation of Ser-94 is mediated mainly by PP1 and to a lesser extent by PP2A. Phosphorylation of spinophilin disrupts its association with F-actin, but does not affect its binding to PP1.

It is found in the cytoplasm. Its subcellular location is the cytoskeleton. The protein localises to the nucleus. It localises to the postsynaptic density. The protein resides in the cell junction. It is found in the adherens junction. Its subcellular location is the cell projection. The protein localises to the dendritic spine. It localises to the cell membrane. The protein resides in the lamellipodium. It is found in the filopodium. Its subcellular location is the ruffle membrane. In terms of biological role, seems to act as a scaffold protein in multiple signaling pathways. Modulates excitatory synaptic transmission and dendritic spine morphology. Binds to actin filaments (F-actin) and shows cross-linking activity. Binds along the sides of the F-actin. May play an important role in linking the actin cytoskeleton to the plasma membrane at the synaptic junction. Believed to target protein phosphatase 1/PP1 to dendritic spines, which are rich in F-actin, and regulates its specificity toward ion channels and other substrates, such as AMPA-type and NMDA-type glutamate receptors. Plays a role in regulation of G-protein coupled receptor signaling, including dopamine D2 receptors and alpha-adrenergic receptors. May establish a signaling complex for dopaminergic neurotransmission through D2 receptors by linking receptors downstream signaling molecules and the actin cytoskeleton. Binds to ADRA1B and RGS2 and mediates regulation of ADRA1B signaling. May confer to Rac signaling specificity by binding to both, RacGEFs and Rac effector proteins. Probably regulates p70 S6 kinase activity by forming a complex with TIAM1. Required for hepatocyte growth factor (HGF)-induced cell migration. The protein is Neurabin-2 (Ppp1r9b) of Mus musculus (Mouse).